Here is a 491-residue protein sequence, read N- to C-terminus: MSRAYDLVVIGAGSGGLEAGWNAASLHKKRVAVIDLQKHHGPPHYAALGGTCVNVGCVPKKLMVTGANYMDTIRESAGFGWELDRESVRPNWKALIAAKNKAVSGINDSYEGMFADTEGLTFHQGFGALQDNHTVLVRESADPNSAVLETLDTEYILLATGSWPQHLGIEGDDLCITSNEAFYLDEAPKRALCVGGGYISIEFAGIFNAYKARGGQVDLAYRGDMILRGFDSELRKQLTEQLRANGINVRTHENPAKVTKNADGTRHVVFESGAEADYDVVMLAIGRVPRSQTLQLDKAGVEVAKNGAIKVDAYSKTNVDNIYAIGDVTDRVMLTPVAINEGAAFVDTVFANKPRATDHTKVACAVFSIPPMGVCGYVEEDAAKKYDQVAVYESSFTPLMHNISGSTYKKFMVRIVTNHADGEVLGVHMLGDSSPEIIQSVAICLKMGAKISDFYNTIGVHPTSAEELCSMRTPAYFYQKGKRVEKIDSNL.

35–51 (DLQKHHGPPHYAALGGT) lines the FAD pocket. Cys-52 and Cys-57 are oxidised to a cystine. The Proton acceptor role is filled by His-461.

This sequence belongs to the class-I pyridine nucleotide-disulfide oxidoreductase family. Homodimer. FAD serves as cofactor. The N-terminus is blocked.

It is found in the cytoplasm. The enzyme catalyses trypanothione + NADP(+) = trypanothione disulfide + NADPH + H(+). Its function is as follows. Trypanothione is the parasite analog of glutathione; this enzyme is the equivalent of glutathione reductase. The chain is Trypanothione reductase (TPR) from Crithidia fasciculata.